Consider the following 773-residue polypeptide: Polyribonucleotide nucleotidyltransferase (773 aa).

Residues Asp-490 and Asp-496 each coordinate Mg(2+). The KH domain maps to 557–616; sequence PKIDTITIPVDKIKVVIGKGGEQIDKIIAETGVKIDIDDEGLCSIFSSDQAAIDRAKEII. The region spanning 626-694 is the S1 motif domain; sequence GEIYDAKVVR…DKGRVDASMR (69 aa). Over residues 700 to 721 the composition is skewed to basic and acidic residues; the sequence is PEGYVEPERKPRERRENGDRRK. Positions 700–773 are disordered; the sequence is PEGYVEPERK…FPELSTKKPE (74 aa). A compositionally biased stretch (low complexity) spans 739-748; it reads RNNQGNKVGN. Residues 751-773 are compositionally biased toward basic and acidic residues; that stretch reads FELRERKSHIDEEFPELSTKKPE.

It belongs to the polyribonucleotide nucleotidyltransferase family. Requires Mg(2+) as cofactor.

The protein localises to the cytoplasm. It catalyses the reaction RNA(n+1) + phosphate = RNA(n) + a ribonucleoside 5'-diphosphate. Functionally, involved in mRNA degradation. Catalyzes the phosphorolysis of single-stranded polyribonucleotides processively in the 3'- to 5'-direction. In Lactococcus lactis subsp. lactis (strain IL1403) (Streptococcus lactis), this protein is Polyribonucleotide nucleotidyltransferase.